Reading from the N-terminus, the 226-residue chain is MHLLIAAAGSGKRMGANCNKLLLKVAGRSVLAWTLDAVKRSNSISWIGIVGQPSDKEAIVSIFDECALQAKWINGGDSRQESVQLGLEGLPLDAKHVLIHDGARCLVEPELFDKCSEMLRQGVSVIAATPVIDTIKKVSLDGFINKTFNRAELWAAQTPQGFNVEQLRQGHKKALVNNWTVTDDASLFEKLGWPVKILESSPSNIKVTTPFDLLIADALLSSRGAD.

The protein belongs to the IspD/TarI cytidylyltransferase family. IspD subfamily.

It carries out the reaction 2-C-methyl-D-erythritol 4-phosphate + CTP + H(+) = 4-CDP-2-C-methyl-D-erythritol + diphosphate. Its pathway is isoprenoid biosynthesis; isopentenyl diphosphate biosynthesis via DXP pathway; isopentenyl diphosphate from 1-deoxy-D-xylulose 5-phosphate: step 2/6. In terms of biological role, catalyzes the formation of 4-diphosphocytidyl-2-C-methyl-D-erythritol from CTP and 2-C-methyl-D-erythritol 4-phosphate (MEP). The polypeptide is 2-C-methyl-D-erythritol 4-phosphate cytidylyltransferase (Prochlorococcus marinus (strain SARG / CCMP1375 / SS120)).